Consider the following 357-residue polypeptide: Phenylalanine--tRNA ligase alpha subunit (357 aa).

Glutamate 278 is a binding site for Mg(2+).

It belongs to the class-II aminoacyl-tRNA synthetase family. Phe-tRNA synthetase alpha subunit type 1 subfamily. In terms of assembly, tetramer of two alpha and two beta subunits. Mg(2+) is required as a cofactor.

It localises to the cytoplasm. The catalysed reaction is tRNA(Phe) + L-phenylalanine + ATP = L-phenylalanyl-tRNA(Phe) + AMP + diphosphate + H(+). This chain is Phenylalanine--tRNA ligase alpha subunit, found in Albidiferax ferrireducens (strain ATCC BAA-621 / DSM 15236 / T118) (Rhodoferax ferrireducens).